Reading from the N-terminus, the 161-residue chain is DNA-binding protein inhibitor ID-4 (161 aa).

In terms of domain architecture, bHLH spans 52–104 (AAEAAADEPALCLQCDMNDCYSRLRRLVPTIPPNKKVSKVEILQHVIDYILDL).

Heterodimer with other HLH proteins.

It localises to the nucleus. Its function is as follows. Transcriptional regulator (lacking a basic DNA binding domain) which negatively regulates the basic helix-loop-helix (bHLH) transcription factors by forming heterodimers and inhibiting their DNA binding and transcriptional activity. Implicated in regulating a variety of cellular processes, including cellular growth, senescence, differentiation, apoptosis, angiogenesis, and neoplastic transformation. This Mus musculus (Mouse) protein is DNA-binding protein inhibitor ID-4 (Id4).